Here is a 729-residue protein sequence, read N- to C-terminus: MLYKGDTLYLDWLEDGIAELVFDAPGSVNKLDTATVASLGEAIGVLEQQSDLKGLLLRSNKAAFIVGADITEFLSLFLVPEEQLSQWLHFANSVFNRLEDLPVPTIAAVNGYALGGGCECVLATDYRLATPDLRIGLPETKLGIMPGFGGSVRMPRMLGADSALEIIAAGKDVGADQALKIGLVDGVVKAEKLIEGAMAILRQAINGDLDWKAKRQPKQEPLKLSKIEATMSFTIAKGMVAQTAGKHYPAPITAVKTIEAAARFGREEALNLENKSFVPLAHTNEARALVGIFLNDQYVKGKAKKLTKDVETPKQAAVLGAGIMGGGIAYQSAWKGVPVVMKDINDKSLTLGMTEAAKLLNKQLERGKIDGLKLAGVISTIHPTLDYAGFDRVDIVVEAVVENPKVKKAVLAETEQKVRQDTVLASNTSTIPISELANALERPENFCGMHFFNPVHRMPLVEIIRGEKSSDETIAKVVAWASKMGKTPIVVNDCPGFFVNRVLFPYFAGFSQLLRDGADFRKIDKVMEKQFGWPMGPAYLLDVVGIDTAHHAQAVMAAGFPQRMQKDYRDAIDALFDANRFGQKNGLGFWRYKEDSKGKPKKEEDAAVEDLLAEVSQPKRDFSEEEIIARMMIPMVNEVVRCLEEGIIATPAEADMALVYGLGFPPFHGGAFRWLDTLGSAKYLDMAQQYQHLGPLYEVPEGLRNKARHNEPYYPPVEPARPVGDLKTA.

Residues 1–189 (MLYKGDTLYL…KIGLVDGVVK (189 aa)) form an enoyl-CoA hydratase/isomerase region. A substrate-binding site is contributed by aspartate 296. A 3-hydroxyacyl-CoA dehydrogenase region spans residues 311–729 (ETPKQAAVLG…ARPVGDLKTA (419 aa)). Residues methionine 324, aspartate 343, 400–402 (VVE), lysine 407, and serine 429 each bind NAD(+). Histidine 450 serves as the catalytic For 3-hydroxyacyl-CoA dehydrogenase activity. Asparagine 453 contributes to the NAD(+) binding site. Residues asparagine 500 and tyrosine 660 each contribute to the substrate site. The tract at residues 708–729 (RHNEPYYPPVEPARPVGDLKTA) is disordered.

In the N-terminal section; belongs to the enoyl-CoA hydratase/isomerase family. The protein in the C-terminal section; belongs to the 3-hydroxyacyl-CoA dehydrogenase family. In terms of assembly, heterotetramer of two alpha chains (FadB) and two beta chains (FadA).

The catalysed reaction is a (3S)-3-hydroxyacyl-CoA + NAD(+) = a 3-oxoacyl-CoA + NADH + H(+). The enzyme catalyses a (3S)-3-hydroxyacyl-CoA = a (2E)-enoyl-CoA + H2O. It catalyses the reaction a 4-saturated-(3S)-3-hydroxyacyl-CoA = a (3E)-enoyl-CoA + H2O. It carries out the reaction (3S)-3-hydroxybutanoyl-CoA = (3R)-3-hydroxybutanoyl-CoA. The catalysed reaction is a (3Z)-enoyl-CoA = a 4-saturated (2E)-enoyl-CoA. The enzyme catalyses a (3E)-enoyl-CoA = a 4-saturated (2E)-enoyl-CoA. Its pathway is lipid metabolism; fatty acid beta-oxidation. Involved in the aerobic and anaerobic degradation of long-chain fatty acids via beta-oxidation cycle. Catalyzes the formation of 3-oxoacyl-CoA from enoyl-CoA via L-3-hydroxyacyl-CoA. It can also use D-3-hydroxyacyl-CoA and cis-3-enoyl-CoA as substrate. The polypeptide is Fatty acid oxidation complex subunit alpha (Shigella flexneri serotype 5b (strain 8401)).